The primary structure comprises 275 residues: Probable ABC transporter permease protein PH1216 (275 aa).

A run of 6 helical transmembrane segments spans residues 10–30, 73–93, 105–125, 137–157, 181–203, and 241–261; these read LLYI…WSAI, IFTT…GFTI, LLAL…IPLV, ILGL…LLFT, IYTK…YQFT, and IQMA…IALG. Residues 68–260 enclose the ABC transmembrane type-1 domain; that stretch reads ILNSLIFTTF…LPTLLIMIAL (193 aa).

Belongs to the binding-protein-dependent transport system permease family. MalFG subfamily.

Its subcellular location is the cell membrane. Its function is as follows. Probably part of a binding-protein-dependent transport system PH1214/15/16. Probably responsible for the translocation of the substrate across the membrane. This is Probable ABC transporter permease protein PH1216 from Pyrococcus horikoshii (strain ATCC 700860 / DSM 12428 / JCM 9974 / NBRC 100139 / OT-3).